We begin with the raw amino-acid sequence, 487 residues long: Cysteine--tRNA ligase (487 aa).

Cys27 lines the Zn(2+) pocket. The short motif at 29–39 (ATVQGLPHVGH) is the 'HIGH' region element. The disordered stretch occupies residues 174–194 (IDDMQGAPDADPRGKKDPRDF). Residues 183 to 194 (ADPRGKKDPRDF) show a composition bias toward basic and acidic residues. Cys225, His250, and Glu254 together coordinate Zn(2+). The 'KMSKS' region signature appears at 281 to 285 (KMSKS). Lys284 provides a ligand contact to ATP.

Belongs to the class-I aminoacyl-tRNA synthetase family. Monomer. The cofactor is Zn(2+).

The protein localises to the cytoplasm. It carries out the reaction tRNA(Cys) + L-cysteine + ATP = L-cysteinyl-tRNA(Cys) + AMP + diphosphate. This Arthrobacter sp. (strain FB24) protein is Cysteine--tRNA ligase.